The chain runs to 366 residues: Carbamoyl phosphate synthase small chain (366 aa).

The tract at residues 1-171 (MLEKRYLVLE…KTPYVSTGSD (171 aa)) is CPSase. Residues Ser47, Gly221, and Gly223 each contribute to the L-glutamine site. A Glutamine amidotransferase type-1 domain is found at 173–360 (SVVLLDFGKK…ITMMKDFKEK (188 aa)). Cys248 (nucleophile) is an active-site residue. L-glutamine is bound by residues Leu249, Gln252, Asn290, Gly292, and Tyr293. Active-site residues include His333 and Glu335.

It belongs to the CarA family. As to quaternary structure, composed of two chains; the small (or glutamine) chain promotes the hydrolysis of glutamine to ammonia, which is used by the large (or ammonia) chain to synthesize carbamoyl phosphate. Tetramer of heterodimers (alpha,beta)4.

The catalysed reaction is hydrogencarbonate + L-glutamine + 2 ATP + H2O = carbamoyl phosphate + L-glutamate + 2 ADP + phosphate + 2 H(+). It catalyses the reaction L-glutamine + H2O = L-glutamate + NH4(+). The protein operates within amino-acid biosynthesis; L-arginine biosynthesis; carbamoyl phosphate from bicarbonate: step 1/1. It participates in pyrimidine metabolism; UMP biosynthesis via de novo pathway; (S)-dihydroorotate from bicarbonate: step 1/3. In terms of biological role, small subunit of the glutamine-dependent carbamoyl phosphate synthetase (CPSase). CPSase catalyzes the formation of carbamoyl phosphate from the ammonia moiety of glutamine, carbonate, and phosphate donated by ATP, constituting the first step of 2 biosynthetic pathways, one leading to arginine and/or urea and the other to pyrimidine nucleotides. The small subunit (glutamine amidotransferase) binds and cleaves glutamine to supply the large subunit with the substrate ammonia. The sequence is that of Carbamoyl phosphate synthase small chain from Staphylococcus epidermidis (strain ATCC 35984 / DSM 28319 / BCRC 17069 / CCUG 31568 / BM 3577 / RP62A).